A 32-amino-acid polypeptide reads, in one-letter code: Calcitonin (32 aa).

A disulfide bridge connects residues cysteine 1 and cysteine 7. A Proline amide modification is found at proline 32.

This sequence belongs to the calcitonin family.

It localises to the secreted. In terms of biological role, calcitonin is a peptide hormone that causes a rapid but short-lived drop in the level of calcium and phosphate in blood by promoting the incorporation of those ions in the bones. Calcitonin function is mediated by the calcitonin receptor/CALCR and the CALCR-RAMP2 (AMYR2) receptor complex. The polypeptide is Calcitonin (CALCA) (Sus scrofa (Pig)).